We begin with the raw amino-acid sequence, 119 residues long: Holo-[acyl-carrier-protein] synthase (119 aa).

Residues D8 and E59 each coordinate Mg(2+).

This sequence belongs to the P-Pant transferase superfamily. AcpS family. Requires Mg(2+) as cofactor.

It localises to the cytoplasm. The catalysed reaction is apo-[ACP] + CoA = holo-[ACP] + adenosine 3',5'-bisphosphate + H(+). Functionally, transfers the 4'-phosphopantetheine moiety from coenzyme A to a Ser of acyl-carrier-protein. The sequence is that of Holo-[acyl-carrier-protein] synthase from Staphylococcus aureus (strain USA300).